A 173-amino-acid chain; its full sequence is Thiol-disulfide oxidoreductase ResA (173 aa).

Residues 10–29 traverse the membrane as a helical; Signal-anchor for type II membrane protein segment; that stretch reads VIILLILSGAVGFTLYQGYF. The 139-residue stretch at 35–173 folds into the Thioredoxin domain; the sequence is MEIGKEAPNF…LEEYLKKITP (139 aa). Cysteine 73 and cysteine 76 are oxidised to a cystine.

This sequence belongs to the thioredoxin family. ResA subfamily.

The protein resides in the cell membrane. Its pathway is protein modification; cytochrome c assembly. Its function is as follows. Thiol-disulfide oxidoreductase which is required in disulfide reduction during c-type cytochrome synthesis. May accept reducing equivalents from CcdA, leading to breakage of disulfide bonds in apocytochrome c; following this reduction heme can be covalently attached. The chain is Thiol-disulfide oxidoreductase ResA from Bacillus cereus (strain ATCC 10987 / NRS 248).